Here is a 294-residue protein sequence, read N- to C-terminus: 4-hydroxy-tetrahydrodipicolinate synthase (294 aa).

Threonine 47 contacts pyruvate. Tyrosine 135 (proton donor/acceptor) is an active-site residue. Catalysis depends on lysine 163, which acts as the Schiff-base intermediate with substrate. Position 205 (threonine 205) interacts with pyruvate.

The protein belongs to the DapA family. As to quaternary structure, homotetramer; dimer of dimers.

The protein localises to the cytoplasm. It catalyses the reaction L-aspartate 4-semialdehyde + pyruvate = (2S,4S)-4-hydroxy-2,3,4,5-tetrahydrodipicolinate + H2O + H(+). It functions in the pathway amino-acid biosynthesis; L-lysine biosynthesis via DAP pathway; (S)-tetrahydrodipicolinate from L-aspartate: step 3/4. In terms of biological role, catalyzes the condensation of (S)-aspartate-beta-semialdehyde [(S)-ASA] and pyruvate to 4-hydroxy-tetrahydrodipicolinate (HTPA). The protein is 4-hydroxy-tetrahydrodipicolinate synthase of Rickettsia akari (strain Hartford).